The chain runs to 142 residues: 5-hydroxymethyl-dUMP N-hydrolase (142 aa).

Residues Gly7, Ile9, Arg10, Gly11, Ser78, Gly80, Glu84, and Ser108 each contribute to the 5-hydroxymethyl-dUMP site.

Belongs to the 2'-deoxynucleoside 5'-phosphate N-hydrolase 1 family. As to quaternary structure, monomer and homodimer.

It is found in the cytoplasm. The protein localises to the nucleus. It carries out the reaction 5-hydroxymethyl-dUMP + H2O = 5-hydroxymethyluracil + 2-deoxy-D-ribose 5-phosphate. Its function is as follows. Part of a nucleotide salvage pathway that eliminates epigenetically modified 5-hydroxymethyl-dCMP (hmdCMP) in a two-step process entailing deamination to cytotoxic 5-hydroxymethyl-dUMP (hmdUMP), followed by its hydrolysis into 5-hydroxymethyluracil (hmU) and 2-deoxy-D-ribose 5-phosphate (deoxyribosephosphate). Catalyzes the second step in that pathway, the hydrolysis of the N-glycosidic bond in hmdUMP, degrading this cytotoxic nucleotide to avoid its genomic integration. The chain is 5-hydroxymethyl-dUMP N-hydrolase (dnph1) from Tetraodon nigroviridis (Spotted green pufferfish).